Here is a 143-residue protein sequence, read N- to C-terminus: Ribosome maturation factor RimP (143 aa).

Belongs to the RimP family.

The protein localises to the cytoplasm. Required for maturation of 30S ribosomal subunits. The sequence is that of Ribosome maturation factor RimP from Neisseria meningitidis serogroup C / serotype 2a (strain ATCC 700532 / DSM 15464 / FAM18).